A 567-amino-acid polypeptide reads, in one-letter code: Mitochondrial distribution and morphology protein 34 (567 aa).

The SMP-LTD domain occupies 1–224; it reads MSFKFNEESF…LPSALFNMSR (224 aa). The span at 392–416 shows a compositional bias: polar residues; the sequence is NKATETSSNLNADSEITPVSSSHNA. Positions 392–453 are disordered; it reads NKATETSSNL…NRSSSFTSSI (62 aa). The segment covering 417–452 has biased composition (low complexity); that stretch reads TSSVNTITSLTTSSLGSTAGSSNSKNTNRSSSFTSS.

Belongs to the MDM34 family. In terms of assembly, component of the ER-mitochondria encounter structure (ERMES) or MDM complex, composed of MMM1, MDM10, MDM12 and MDM34.

The protein resides in the mitochondrion outer membrane. Its function is as follows. Component of the ERMES/MDM complex, which serves as a molecular tether to connect the endoplasmic reticulum (ER) and mitochondria. Components of this complex are involved in the control of mitochondrial shape and protein biogenesis, and function in nonvesicular lipid trafficking between the ER and mitochondria. MDM34 is required for the interaction of the ER-resident membrane protein MMM1 and the outer mitochondrial membrane-resident beta-barrel protein MDM10. This Vanderwaltozyma polyspora (strain ATCC 22028 / DSM 70294 / BCRC 21397 / CBS 2163 / NBRC 10782 / NRRL Y-8283 / UCD 57-17) (Kluyveromyces polysporus) protein is Mitochondrial distribution and morphology protein 34.